We begin with the raw amino-acid sequence, 287 residues long: 4-hydroxybenzoate octaprenyltransferase (287 aa).

A run of 8 helical transmembrane segments spans residues 19 to 39 (PIGSLLLLWPTLWALWLAADG), 43 to 63 (LHVLVIFTIGTVLMRSAGCVI), 94 to 116 (LALAAGLSALSFVLILPLDPLVI), 135 to 155 (FFAIPQAYLGIAFGFGIPMGF), 160 to 180 (GEVPPIAWVMLLANIFWAVAY), 207 to 227 (FDVAAVMLCYAVALGLLGWVG), 234 to 254 (ALYFAGLAVAAGMALYHYTLI), and 269 to 286 (NNWLGAAVFAGLALDYLI).

This sequence belongs to the UbiA prenyltransferase family. The cofactor is Mg(2+).

It localises to the cell inner membrane. The enzyme catalyses all-trans-octaprenyl diphosphate + 4-hydroxybenzoate = 4-hydroxy-3-(all-trans-octaprenyl)benzoate + diphosphate. The protein operates within cofactor biosynthesis; ubiquinone biosynthesis. Functionally, catalyzes the prenylation of para-hydroxybenzoate (PHB) with an all-trans polyprenyl group. Mediates the second step in the final reaction sequence of ubiquinone-8 (UQ-8) biosynthesis, which is the condensation of the polyisoprenoid side chain with PHB, generating the first membrane-bound Q intermediate 3-octaprenyl-4-hydroxybenzoate. The sequence is that of 4-hydroxybenzoate octaprenyltransferase from Azoarcus sp. (strain BH72).